The sequence spans 659 residues: A-type ATP synthase subunit I (659 aa).

A run of 8 helical transmembrane segments spans residues 376–396 (FFFG…VISA), 415–435 (IMLW…SYCG), 460–480 (VMAL…GFIV), 489–509 (AAIL…LFAL), 513–533 (LGIP…LFVV), 542–562 (MAVL…LSYA), 566–586 (ALAL…NMVW), and 590–610 (IGPI…GHIF).

The protein belongs to the V-ATPase 116 kDa subunit family. In terms of assembly, has multiple subunits with at least A(3), B(3), C, D, E, F, H, I and proteolipid K(x).

It localises to the cell membrane. Component of the A-type ATP synthase that produces ATP from ADP in the presence of a proton gradient across the membrane. The protein is A-type ATP synthase subunit I of Pyrococcus abyssi (strain GE5 / Orsay).